Here is a 270-residue protein sequence, read N- to C-terminus: MIOREX complex component 3 (270 aa).

Residues 1 to 12 (MSRTIPFLFKLV) constitute a mitochondrion transit peptide.

Associates with the mitochondrial ribosome.

It localises to the mitochondrion. Its function is as follows. Component of MIOREX complexes, large expressome-like assemblies of ribosomes with factors involved in all the steps of post-transcriptional gene expression. In Saccharomyces cerevisiae (strain ATCC 204508 / S288c) (Baker's yeast), this protein is MIOREX complex component 3.